The chain runs to 992 residues: MGVPSFFRWLSRKYPKIISPVLEEYPVIEDGVQLPLDYSSANPNGELDNLYLDMNGIVHPCSHPENKPPPETEDEMLLAVFEYTNRVLNMARPRKVLMIAVDGVAPRAKMNQQRARRFRSARDAKLQNEAREQVLREREDYGETIDENVKSKKTWDSNAITPGTPFMDKLATALRYWTSFKLATDPGWKNLQIIISDATVPGEGEHKIMNFIRSQRADTQYNPNTTHCIYGLDADLIFLGLATHEPHFKILREDVFANNNYKKPKPQDMINLSEEEKQQLIQQDSEKPFLWLHISVLREYLSAELAIPHLSFQFDFERAIDDWVFMCFFCGNDFLPHLPCLDVRENSIDILVDIWKTVLPKTKTYLTCDGTLNLEPVEALLEQLGDRETDLFKKKYIQEVRKQEAHDRRKKLKSNPNVSQGKVDRNFMIPLENMPVYDVDGNAAEGSLNLSNKDFANMRKEINLANEGDGEAAKALKLKSEKNSGVVEFSSEELKNSVQLSKTANYDAATSLQEKLIAKKMAMRDEENAEELSLKRKSEDVDSAEKETSNEPEDDEADYDEDEGSTVPPAVIHTGIVKSGFIDTDESVRLYEPGYHDRYYQHKFHVPAKDIPALQKDVIRCYVEGISWVLLYYYQGCASWTWYYPYHYAPFAQDFKNIKNLDIHFDLGEPFLPYEQLMSVLPAASGHALPEIFRPLMSDPNSEIIDFYPEEFPVDMNGKKMAWQGIALLPFIDETRLLKTVREQYSKLSDSEKARNVRKKDALLISNKNVNYDLFMKNLYGENPVNVIEFRHFKSGLSGFVTQAEEGFELNSKLICPINGGGLPDLSTNLFLKLSYTQPVVAGRCKSLVLNGYIPPQPMLTPQDRDCIIYKYSNRWNPSMMKYNIVPVGPSGITQYQPRVGGYRSFFFHKEQTAYAQQPQQNREYMHSQQRQPQGSRYQQSRYNNGNYNNSNNGYSDNNNGNTGKYNRHYNNSRGNSNRYSNSNDRRREFRR.

Basic and acidic residues predominate over residues 528–549 (NAEELSLKRKSEDVDSAEKETS). Disordered stretches follow at residues 528 to 568 (NAEE…STVP) and 916 to 992 (AQQP…EFRR). The span at 550–564 (NEPEDDEADYDEDEG) shows a compositional bias: acidic residues. 2 stretches are compositionally biased toward low complexity: residues 928-962 (SQQRQPQGSRYQQSRYNNGNYNNSNNGYSDNNNGN) and 969-983 (HYNNSRGNSNRYSNS).

The protein belongs to the 5'-3' exonuclease family. XRN2/RAT1 subfamily. In terms of assembly, interacts with RAI1; the interaction is direct, stabilizes RAT1 protein structure and may stimulate its exoribonuclease activity. The interaction also stimulates RAI1 pyrophosphohydrolase activity, probably by recruiting it to mRNA substrates.

The protein resides in the nucleus. Its function is as follows. Possesses 5'-&gt;3' exoribonuclease activity. Required for the processing of nuclear mRNA and rRNA precursors. May promote the termination of transcription by RNA polymerase II. Essential for vegetative cell growth and chromosome segregation. The sequence is that of 5'-3' exoribonuclease 2 (RAT1) from Kluyveromyces lactis (strain ATCC 8585 / CBS 2359 / DSM 70799 / NBRC 1267 / NRRL Y-1140 / WM37) (Yeast).